The chain runs to 276 residues: ARL14 effector protein (276 aa).

The disordered stretch occupies residues 158-177; the sequence is KQTEFAPEGGKREKRKLTKA. Residue lysine 176 forms a Glycyl lysine isopeptide (Lys-Gly) (interchain with G-Cter in SUMO2) linkage. Phosphoserine is present on residues serine 182 and serine 266.

Interacts with ARL14 and MYO1E.

It localises to the cytoplasm. Functionally, through its interaction with ARL14 and MYO1E, may connect MHC class II-containing cytoplasmic vesicles to the actin network and hence controls the movement of these vesicles along the actin cytoskeleton in dendritic cells. In Mus musculus (Mouse), this protein is ARL14 effector protein (Arl14ep).